Reading from the N-terminus, the 404-residue chain is Phosphopentomutase (404 aa).

Residues D10, D303, H308, D344, H345, and H356 each coordinate Mn(2+).

This sequence belongs to the phosphopentomutase family. It depends on Mn(2+) as a cofactor.

Its subcellular location is the cytoplasm. It carries out the reaction 2-deoxy-alpha-D-ribose 1-phosphate = 2-deoxy-D-ribose 5-phosphate. It catalyses the reaction alpha-D-ribose 1-phosphate = D-ribose 5-phosphate. It participates in carbohydrate degradation; 2-deoxy-D-ribose 1-phosphate degradation; D-glyceraldehyde 3-phosphate and acetaldehyde from 2-deoxy-alpha-D-ribose 1-phosphate: step 1/2. Isomerase that catalyzes the conversion of deoxy-ribose 1-phosphate (dRib-1-P) and ribose 1-phosphate (Rib-1-P) to deoxy-ribose 5-phosphate (dRib-5-P) and ribose 5-phosphate (Rib-5-P), respectively. The protein is Phosphopentomutase of Shewanella sp. (strain MR-4).